The chain runs to 331 residues: Eukaryotic translation initiation factor 3 subunit I (331 aa).

WD repeat units lie at residues 8–47 (LHERPITQVLFNREGDLLFVAAKDKLVSLWYTTNGERIGS), 49–88 (QCGGVVYSIDVSQDSKYLITASADAKARVWDVSSGRQLDS), 142–181 (SPQCKITQATWGPLNKTIFASCEDGAVRIYCTEKRELIKT), 184–223 (DHNKLVTRIEWTKHRIMFMTCSKDGTAKLYDTKTLKLLRT), and 281–320 (GHIGPVHSICFTPDGKTFATGGEEGLVQVNHLDESYFEFD).

Belongs to the eIF-3 subunit I family. In terms of assembly, component of the eukaryotic translation initiation factor 3 (eIF-3) complex.

Its subcellular location is the cytoplasm. In terms of biological role, component of the eukaryotic translation initiation factor 3 (eIF-3) complex, which is involved in protein synthesis of a specialized repertoire of mRNAs and, together with other initiation factors, stimulates binding of mRNA and methionyl-tRNAi to the 40S ribosome. The eIF-3 complex specifically targets and initiates translation of a subset of mRNAs involved in cell proliferation. This Dictyostelium discoideum (Social amoeba) protein is Eukaryotic translation initiation factor 3 subunit I (eif3I).